Consider the following 69-residue polypeptide: Putative membrane protein insertion efficiency factor (69 aa).

It belongs to the UPF0161 family.

It localises to the cell inner membrane. Its function is as follows. Could be involved in insertion of integral membrane proteins into the membrane. The sequence is that of Putative membrane protein insertion efficiency factor from Dechloromonas aromatica (strain RCB).